The sequence spans 179 residues: Cytochrome b6-f complex iron-sulfur subunit (179 aa).

Residues 21–43 form a helical membrane-spanning segment; it reads LLTFGSATGVALGMLYPVVRYFI. Residues 61-162 enclose the Rieske domain; it reads GNDISVSDFL…AAVSDDKITF (102 aa). Residues Cys108, His110, Cys126, and His129 each coordinate [2Fe-2S] cluster. Cys113 and Cys128 form a disulfide bridge.

It belongs to the Rieske iron-sulfur protein family. As to quaternary structure, the 4 large subunits of the cytochrome b6-f complex are cytochrome b6, subunit IV (17 kDa polypeptide, PetD), cytochrome f and the Rieske protein, while the 4 small subunits are PetG, PetL, PetM and PetN. The complex functions as a dimer. [2Fe-2S] cluster is required as a cofactor.

The protein localises to the cellular thylakoid membrane. It catalyses the reaction 2 oxidized [plastocyanin] + a plastoquinol + 2 H(+)(in) = 2 reduced [plastocyanin] + a plastoquinone + 4 H(+)(out). In terms of biological role, component of the cytochrome b6-f complex, which mediates electron transfer between photosystem II (PSII) and photosystem I (PSI), cyclic electron flow around PSI, and state transitions. The sequence is that of Cytochrome b6-f complex iron-sulfur subunit from Cyanothece sp. (strain PCC 7425 / ATCC 29141).